The sequence spans 353 residues: Photosystem II protein D1 (353 aa).

N-acetylthreonine is present on Thr2. Thr2 bears the Phosphothreonine mark. The next 3 membrane-spanning stretches (helical) occupy residues 29 to 46, 118 to 133, and 142 to 156; these read YIGWFGVLMIPTLLTATS, HFLLGVACYMGREWEL, and WIAVAYSAPVAAATA. Chlorophyll a is bound at residue His118. Tyr126 contributes to the pheophytin a binding site. Positions 170 and 189 each coordinate [CaMn4O5] cluster. The helical transmembrane segment at 197–218 threads the bilayer; the sequence is FHMLGVAGVFGGSLFSAMHGSL. Chlorophyll a is bound at residue His198. A quinone contacts are provided by residues His215 and 264–265; that span reads SF. Position 215 (His215) interacts with Fe cation. His272 provides a ligand contact to Fe cation. Residues 274 to 288 traverse the membrane as a helical segment; the sequence is FLAAWPVVGIWFTAL. His332, Glu333, Asp342, and Ala344 together coordinate [CaMn4O5] cluster. The propeptide occupies 345-353; the sequence is SVEAPSTNG.

This sequence belongs to the reaction center PufL/M/PsbA/D family. As to quaternary structure, PSII is composed of 1 copy each of membrane proteins PsbA, PsbB, PsbC, PsbD, PsbE, PsbF, PsbH, PsbI, PsbJ, PsbK, PsbL, PsbM, PsbT, PsbX, PsbY, PsbZ, Psb30/Ycf12, at least 3 peripheral proteins of the oxygen-evolving complex and a large number of cofactors. It forms dimeric complexes. The cofactor is The D1/D2 heterodimer binds P680, chlorophylls that are the primary electron donor of PSII, and subsequent electron acceptors. It shares a non-heme iron and each subunit binds pheophytin, quinone, additional chlorophylls, carotenoids and lipids. D1 provides most of the ligands for the Mn4-Ca-O5 cluster of the oxygen-evolving complex (OEC). There is also a Cl(-1) ion associated with D1 and D2, which is required for oxygen evolution. The PSII complex binds additional chlorophylls, carotenoids and specific lipids.. Tyr-161 forms a radical intermediate that is referred to as redox-active TyrZ, YZ or Y-Z. In terms of processing, C-terminally processed by CTPA; processing is essential to allow assembly of the oxygen-evolving complex and thus photosynthetic growth.

It is found in the plastid. The protein resides in the chloroplast thylakoid membrane. It catalyses the reaction 2 a plastoquinone + 4 hnu + 2 H2O = 2 a plastoquinol + O2. Functionally, photosystem II (PSII) is a light-driven water:plastoquinone oxidoreductase that uses light energy to abstract electrons from H(2)O, generating O(2) and a proton gradient subsequently used for ATP formation. It consists of a core antenna complex that captures photons, and an electron transfer chain that converts photonic excitation into a charge separation. The D1/D2 (PsbA/PsbD) reaction center heterodimer binds P680, the primary electron donor of PSII as well as several subsequent electron acceptors. The protein is Photosystem II protein D1 of Acorus calamus (Sweet flag).